We begin with the raw amino-acid sequence, 1079 residues long: Translation initiation factor IF-2 (1079 aa).

Composition is skewed to basic and acidic residues over residues 52–65 (VQAQ…KEGN), 75–90 (RDGD…KAPE), and 102–134 (APER…KEPQ). The interval 52 to 488 (VQAQRDGGAR…RGKKDVRPAA (437 aa)) is disordered. A compositionally biased stretch (low complexity) spans 150–184 (APVAKVVEAAPAETPAPEAPAVKATVTAEAAPAKT). Over residues 185–194 (VEPESERPQA) the composition is skewed to basic and acidic residues. Residues 276-291 (AAVAQQQMQQQAAQQQ) are compositionally biased toward low complexity. The segment covering 306–327 (GGYRPEGQREGGYRPEGQREGG) has biased composition (basic and acidic residues). 2 stretches are compositionally biased toward low complexity: residues 348–370 (EGGY…GPRP) and 380–398 (PGAP…APRP). Over residues 419-429 (PRPGGFGGAPG) the composition is skewed to gly residues. Positions 461–471 (PRGRSDDDVMR) are enriched in basic and acidic residues. Basic residues predominate over residues 473 to 482 (PRGRGKRGKK). The region spanning 578–745 (TRPPVVTIMG…LIAIQAEILE (168 aa)) is the tr-type G domain. A G1 region spans residues 587-594 (GHVDHGKT). Residue 587-594 (GHVDHGKT) coordinates GTP. The interval 612-616 (GITQH) is G2. A G3 region spans residues 633–636 (DTPG). GTP contacts are provided by residues 633 to 637 (DTPGH) and 687 to 690 (NKMD). Residues 687–690 (NKMD) form a G4 region. The tract at residues 723–725 (SAK) is G5.

This sequence belongs to the TRAFAC class translation factor GTPase superfamily. Classic translation factor GTPase family. IF-2 subfamily.

The protein localises to the cytoplasm. One of the essential components for the initiation of protein synthesis. Protects formylmethionyl-tRNA from spontaneous hydrolysis and promotes its binding to the 30S ribosomal subunits. Also involved in the hydrolysis of GTP during the formation of the 70S ribosomal complex. This Nitratidesulfovibrio vulgaris (strain DP4) (Desulfovibrio vulgaris) protein is Translation initiation factor IF-2.